Here is an 84-residue protein sequence, read N- to C-terminus: MKGDIIISPLSTEKTALMAEKENKLTLMVRRDANREMIKKEVEERFGVKVEGINVMITKKGKKAIVKLAKEYSAEEIAERIGVF.

This sequence belongs to the universal ribosomal protein uL23 family. In terms of assembly, part of the 50S ribosomal subunit. Contacts protein L29.

Its function is as follows. Binds to 23S rRNA. One of the proteins that surrounds the polypeptide exit tunnel on the outside of the ribosome. This is Large ribosomal subunit protein uL23 from Thermoplasma acidophilum (strain ATCC 25905 / DSM 1728 / JCM 9062 / NBRC 15155 / AMRC-C165).